The sequence spans 524 residues: MNSDQENINSYNFESIKIGDYKCNVNRIPGDNLYLLSNFNDAEPKYDDKNGVHLEFNYKKIGESKTMRLNDGATSTVLIEGARNMNANEYFPKFVEKKKSFAEHLIRKTFAKGYESPSEIQALVVPELIQRKDTLIQFKSGTGKTHAFLFGCLWGFDPDDDVLQYIFITSSHEVATQIYEQAVFLLPETAKIALCIGQKKSPNSFGNSGFKTPIGTSSLNHKPKSIKEEREEIRQAQIIICTMGRFYDILCNKGWITTTRYLKAICVDEFDNIVASKTKQRSSTVMNTEDQMAEIIQKIESEAPKNSENGAQRVFFSATVSPYAIKIANSYFRKYSPIIGEPFIVLLDSEDYTLEGIRQYYVQCSNYFEKKEIILDLLKQCRIAQAIIFANRIETANEIKKLLDEQEVPISSAVFHGDLPAVTRKNIHKDFVENKIRLLISTDLTSRGLDVQGINVVFNFDMPDTLETYIHRVGRSGRYGRKGVSISLILVNQNKNEMEKVEQIDNCSKQSKMSQLPGDLSTLL.

The 214-residue stretch at 125-338 (VPELIQRKDT…NSYFRKYSPI (214 aa)) folds into the Helicase ATP-binding domain. An ATP-binding site is contributed by 138–145 (FKSGTGKT). Positions 268–271 (DEFD) match the DEFD box motif. Residues 373–524 (IILDLLKQCR…QLPGDLSTLL (152 aa)) enclose the Helicase C-terminal domain.

The protein belongs to the DEAD box helicase family. eIF4A subfamily.

The catalysed reaction is ATP + H2O = ADP + phosphate + H(+). Its function is as follows. Putative ATP-dependent RNA helicase. This is Putative ATP-dependent RNA helicase R458 from Acanthamoeba polyphaga mimivirus (APMV).